The primary structure comprises 263 residues: MTDNAPRIHPTAVIDPAARLADDVQVGAFTLIGADVEIGAGTVVGPHCSIHGPTRIGRDNRFIGHAAIGGEPQDKKFAGERTELVIGDRNVFREFVTLNRGTGGGGGITTIGNDNWMLAYTHVAHDCHVGNFCVFSNNTTLAGHVTVGDYVIISGFAGAHQFCRIGAHAFLGMGALTNGDVPPFTMVGTDSLGRPRGINSEGLKRRGFDAERISAIKRAYRTLYVAGLPLAEAKVQLTEQARDSDDVKAMLDFIEHAERPLLR.

It belongs to the transferase hexapeptide repeat family. LpxA subfamily. As to quaternary structure, homotrimer.

It is found in the cytoplasm. It carries out the reaction a (3R)-hydroxyacyl-[ACP] + UDP-N-acetyl-alpha-D-glucosamine = a UDP-3-O-[(3R)-3-hydroxyacyl]-N-acetyl-alpha-D-glucosamine + holo-[ACP]. It functions in the pathway glycolipid biosynthesis; lipid IV(A) biosynthesis; lipid IV(A) from (3R)-3-hydroxytetradecanoyl-[acyl-carrier-protein] and UDP-N-acetyl-alpha-D-glucosamine: step 1/6. Functionally, involved in the biosynthesis of lipid A, a phosphorylated glycolipid that anchors the lipopolysaccharide to the outer membrane of the cell. This Stenotrophomonas maltophilia (strain K279a) protein is Acyl-[acyl-carrier-protein]--UDP-N-acetylglucosamine O-acyltransferase.